An 850-amino-acid chain; its full sequence is Pentatricopeptide repeat-containing protein At5g16860 (850 aa).

PPR repeat units lie at residues 58–88 (TLNL…FPPS), 91–125 (GVYH…SWTP), 126–160 (DNYT…GFIS), 161–191 (NVFV…MSVW), 192–227 (DVVS…GCRP), 228–262 (DNIT…EMIQ), 263–293 (NMFV…MSVK), 294–328 (DVVS…KIKM), 329–363 (DVVT…GIKP), 364–398 (NEVT…PIDL), 406–436 (ENMV…LSPK), 439–473 (DVVT…DCQT), 476–510 (NAFT…QQNA), 512–542 (PLFV…MMAK), 543–577 (NEVT…GFKL), 578–608 (DGVT…MKTV), and 614–644 (GPEH…MPME). The interval 649–724 (VWVAFLSCCR…RPGCSWVEGI (76 aa)) is type E motif. Residues 725-755 (KGTTTFFVGDKTHPHAKEIYQVLLDHMQRIK) are type E(+) motif. Positions 756–850 (DIGYVPETGF…NGSCSCKGYW (95 aa)) are type DYW motif.

The protein belongs to the PPR family. PCMP-H subfamily.

This chain is Pentatricopeptide repeat-containing protein At5g16860 (PCMP-H92), found in Arabidopsis thaliana (Mouse-ear cress).